A 276-amino-acid polypeptide reads, in one-letter code: UPF0276 protein PA4106 (276 aa).

It belongs to the UPF0276 family.

The protein is UPF0276 protein PA4106 of Pseudomonas aeruginosa (strain ATCC 15692 / DSM 22644 / CIP 104116 / JCM 14847 / LMG 12228 / 1C / PRS 101 / PAO1).